The sequence spans 263 residues: NADH dehydrogenase [ubiquinone] iron-sulfur protein 3, mitochondrial (263 aa).

A mitochondrion-targeting transit peptide spans 1 to 35 (MVAAVARLWWRGLLGASALTRGAGRPSVLLLPVRR).

This sequence belongs to the complex I 30 kDa subunit family. Core subunit of respiratory chain NADH dehydrogenase (Complex I) which is composed of 45 different subunits. Interacts with NDUFAF3. Interacts with RAB5IF. Found in subcomplexes containing subunits NDUFS2, MT-ND1 and NDUFA13.

The protein resides in the mitochondrion inner membrane. It carries out the reaction a ubiquinone + NADH + 5 H(+)(in) = a ubiquinol + NAD(+) + 4 H(+)(out). Functionally, core subunit of the mitochondrial membrane respiratory chain NADH dehydrogenase (Complex I) which catalyzes electron transfer from NADH through the respiratory chain, using ubiquinone as an electron acceptor. Essential for the catalytic activity and assembly of complex I. This Pongo pygmaeus (Bornean orangutan) protein is NADH dehydrogenase [ubiquinone] iron-sulfur protein 3, mitochondrial (NDUFS3).